Here is a 324-residue protein sequence, read N- to C-terminus: Serine racemase (324 aa).

Positions 32, 51, and 52 each coordinate ATP. K56 (proton acceptor) is an active-site residue. The residue at position 56 (K56) is an N6-(pyridoxal phosphate)lysine. Position 78 (T78) interacts with Ca(2+). The active-site Proton acceptor is the S81. N83 contacts pyridoxal 5'-phosphate. Residues Q86 and Y118 each contribute to the ATP site. D175 is a binding site for Mg(2+). Residues G182, G183, G184, and G185 each coordinate pyridoxal 5'-phosphate. Ca(2+)-binding residues include E207, A211, and D213. Mg(2+)-binding residues include E207, A211, and D213. Mn(2+)-binding residues include E207, A211, and D213. ATP is bound at residue K277. Residue S310 coordinates pyridoxal 5'-phosphate. N313 provides a ligand contact to ATP.

It belongs to the serine/threonine dehydratase family. Homodimer. It depends on Mg(2+) as a cofactor. Mn(2+) serves as cofactor. Requires Ca(2+) as cofactor. The cofactor is pyridoxal 5'-phosphate.

The catalysed reaction is L-serine = D-serine. It carries out the reaction L-serine = pyruvate + NH4(+). The enzyme catalyses D-serine = pyruvate + NH4(+). Catalyzes the synthesis of D-serine from L-serine. Has dehydratase activity towards both L-serine and D-serine. This chain is Serine racemase (srr), found in Dictyostelium discoideum (Social amoeba).